Reading from the N-terminus, the 282-residue chain is MSNFSMETLKLLRQQTGVGLTKCKEALAECNGNLEEAVVHLRKLGLASASKKEHRETKEGVIAAKSDARGTAVVEVNVETDFVANNAVFRTFVDGLVEDVLNHKVNSVDALLPLTSSQDASLTIDELRAVTMQTVGENIRISRIKYLPKTTEESVGIYSHGNGKAVSVTVLSGVADKESLAKDISMHIVAAQPLFLNKESVPADALEREKEVISSQVQGKPQAVIDKIISGKLGTFFQDVCLLEQAFIKNPDITIQGLVDDASKTSGNSVEVKEFILWKIGA.

Residues 80–83 are involved in Mg(2+) ion dislocation from EF-Tu; the sequence is TDFV.

Belongs to the EF-Ts family.

It localises to the cytoplasm. Associates with the EF-Tu.GDP complex and induces the exchange of GDP to GTP. It remains bound to the aminoacyl-tRNA.EF-Tu.GTP complex up to the GTP hydrolysis stage on the ribosome. The polypeptide is Elongation factor Ts (Chlamydia caviae (strain ATCC VR-813 / DSM 19441 / 03DC25 / GPIC) (Chlamydophila caviae)).